We begin with the raw amino-acid sequence, 621 residues long: Methionine--tRNA ligase (621 aa).

Positions 11 to 21 (PYANGPRHIGH) match the 'HIGH' region motif. Zn(2+) is bound by residues Cys-143, Cys-146, Cys-156, and Cys-159. The 'KMSKS' region signature appears at 347 to 351 (KFSSS). Ser-350 lines the ATP pocket.

The protein belongs to the class-I aminoacyl-tRNA synthetase family. MetG type 1 subfamily. As to quaternary structure, monomer. Requires Zn(2+) as cofactor.

It is found in the cytoplasm. The catalysed reaction is tRNA(Met) + L-methionine + ATP = L-methionyl-tRNA(Met) + AMP + diphosphate. Its function is as follows. Is required not only for elongation of protein synthesis but also for the initiation of all mRNA translation through initiator tRNA(fMet) aminoacylation. The sequence is that of Methionine--tRNA ligase from Bifidobacterium longum subsp. infantis (strain ATCC 15697 / DSM 20088 / JCM 1222 / NCTC 11817 / S12).